The primary structure comprises 317 residues: Olfactory receptor-like protein OLF3 (317 aa).

Topologically, residues 1 to 25 (MGTGNQTWVREFVLLGLSSDWDTEV) are extracellular. N-linked (GlcNAc...) asparagine glycosylation occurs at Asn-5. Residues 26–49 (SLFVLFLITYMVTVLGNFLIILLI) traverse the membrane as a helical segment. Residues 50–57 (RLDSRLHT) lie on the Cytoplasmic side of the membrane. Residues 58–79 (PMYFFLTNLSLVDVSYATSIIP) form a helical membrane-spanning segment. Residues 80–100 (QMLAHLLAAHKAIPFVSCAAQ) lie on the Extracellular side of the membrane. A helical transmembrane segment spans residues 101–120 (LFFSLGLGGIEFVLLAVMAY). Residues 121-139 (DRYVAVCDPLRYSVIMHGG) are Cytoplasmic-facing. A helical transmembrane segment spans residues 140 to 158 (LCTRLAITSWVSGSMNSLM). Residues 159–196 (QTVITFQLPMCTNKYIDHISCELLAVVRLACVDTSSNE) lie on the Extracellular side of the membrane. Residues 197–219 (IAIMVSSIVLLMTPFCLVLLSYI) traverse the membrane as a helical segment. Over 220–236 (QIISTILKIQSTEGRKK) the chain is Cytoplasmic. The helical transmembrane segment at 237–260 (AFHTCASHLTVVVLCYGMAIFTYI) threads the bilayer. Residues 261-272 (QPRSSPSVLQEK) lie on the Extracellular side of the membrane. The helical transmembrane segment at 273–292 (LISLFYSVLTPMLNPMIYSV) threads the bilayer. Residues 293-317 (RNKEVKGAWQKLLGQLTGITSKLAT) lie on the Cytoplasmic side of the membrane.

Belongs to the G-protein coupled receptor 1 family.

The protein localises to the cell membrane. Its function is as follows. Putative odorant or sperm cell receptor. The polypeptide is Olfactory receptor-like protein OLF3 (Canis lupus familiaris (Dog)).